Here is a 294-residue protein sequence, read N- to C-terminus: MKREDVLMEALPYIQKFHGRSMVIKLGGHAMVDTCIMDTVIRDVVLLQLVGIKCVIVHGGGPEITEKMKAMGKQPRFVSGLRITDDDTLEVAQMVLVGKINSKIVSLVSRAGGRAVGISGNDANLIIARKMDRQKVRVENREEEVDLGHVGEIEEIRPALLHTLLDNQFIPVISPLAIDRNGNDLNINADTAAGELAIALGAHKLISMTDVDGIMNRERTEVYRRMTPQDAEELIASGVVSEGMIPKVLAVLRALHGGVPYAHIINGNLAHNLIMELFTAEGVGTMITDRIDEV.

Substrate is bound by residues 60–61, Arg82, and Asn186; that span reads GG.

Belongs to the acetylglutamate kinase family. ArgB subfamily.

The protein resides in the cytoplasm. The catalysed reaction is N-acetyl-L-glutamate + ATP = N-acetyl-L-glutamyl 5-phosphate + ADP. Its pathway is amino-acid biosynthesis; L-arginine biosynthesis; N(2)-acetyl-L-ornithine from L-glutamate: step 2/4. Catalyzes the ATP-dependent phosphorylation of N-acetyl-L-glutamate. The polypeptide is Acetylglutamate kinase (Methanospirillum hungatei JF-1 (strain ATCC 27890 / DSM 864 / NBRC 100397 / JF-1)).